Consider the following 399-residue polypeptide: MTEINWKDNLRIAWFGNFLTGASISLVVPFMPIFVENLGVGSQQVAFYAGLAISVSAISAALFSPIWGILADKYGRKPMMIRAGLAMTITMGGLAFVPNIYWLIFLRLLNGVFAGFVPNATALIASQVPKEKSGSALGTLSTGVVAGTLTGPFIGGFIAELFGIRTVFLLVGSFLFLAAILTICFIKEDFQPVAKEKAIPTKELFTSVKYPYLLLNLFLTSFVIQFSAQSIGPILALYVRDLGQTENLLFVSGLIVSSMGFSSMMSAGVMGKLGDKVGNHRLLVVAQFYSVIIYLLCANASSPLQLGLYRFLFGLGTGALIPGVNALLSKMTPKAGISRVFAFNQVFFYLGGVVGPMAGSAVAGQFGYHAVFYATSLCVAFSCLFNLIQFRTLLKVKEI.

The next 10 membrane-spanning stretches (helical) occupy residues 12–34 (IAWF…MPIF), 49–71 (AGLA…GILA), 84–106 (GLAM…LIFL), 140–162 (LSTG…AELF), 167–186 (VFLL…ICFI), 217–239 (LFLT…ALYV), 248–270 (LLFV…AGVM), 306–328 (LGLY…NALL), 340–362 (VFAF…GSAV), and 366–388 (FGYH…FNLI).

It belongs to the major facilitator superfamily. TCR/Tet family.

It is found in the cell membrane. Functionally, efflux pump for various substrates. The protein is Multi-drug resistance efflux pump PmrA (pmrA) of Streptococcus pneumoniae serotype 4 (strain ATCC BAA-334 / TIGR4).